Reading from the N-terminus, the 327-residue chain is GTP 3',8-cyclase (327 aa).

One can recognise a Radical SAM core domain in the interval 7-232 (HHDRQFRYLR…IKRDRTAGPA (226 aa)). Arginine 16 contacts GTP. Residues cysteine 23 and cysteine 27 each coordinate [4Fe-4S] cluster. Position 29 (tyrosine 29) interacts with S-adenosyl-L-methionine. Residue cysteine 30 participates in [4Fe-4S] cluster binding. Position 66 (arginine 66) interacts with GTP. An S-adenosyl-L-methionine-binding site is contributed by glycine 70. Residue threonine 97 participates in GTP binding. Serine 121 serves as a coordination point for S-adenosyl-L-methionine. Lysine 158 is a GTP binding site. Methionine 192 contacts S-adenosyl-L-methionine. Cysteine 255 and cysteine 258 together coordinate [4Fe-4S] cluster. 260 to 262 (RLR) is a binding site for GTP. Cysteine 272 contacts [4Fe-4S] cluster.

This sequence belongs to the radical SAM superfamily. MoaA family. In terms of assembly, monomer and homodimer. The cofactor is [4Fe-4S] cluster.

The enzyme catalyses GTP + AH2 + S-adenosyl-L-methionine = (8S)-3',8-cyclo-7,8-dihydroguanosine 5'-triphosphate + 5'-deoxyadenosine + L-methionine + A + H(+). The protein operates within cofactor biosynthesis; molybdopterin biosynthesis. Catalyzes the cyclization of GTP to (8S)-3',8-cyclo-7,8-dihydroguanosine 5'-triphosphate. The protein is GTP 3',8-cyclase of Synechococcus elongatus (strain ATCC 33912 / PCC 7942 / FACHB-805) (Anacystis nidulans R2).